A 214-amino-acid polypeptide reads, in one-letter code: Ribonuclease HII (214 aa).

Residues 18–208 (SRVVGVDEVG…SLLPSEAHLC (191 aa)) form the RNase H type-2 domain. A divalent metal cation is bound by residues Asp-24, Glu-25, and Asp-116.

Belongs to the RNase HII family. The cofactor is Mn(2+). Requires Mg(2+) as cofactor.

The protein resides in the cytoplasm. It carries out the reaction Endonucleolytic cleavage to 5'-phosphomonoester.. Endonuclease that specifically degrades the RNA of RNA-DNA hybrids. This is Ribonuclease HII from Thermosynechococcus vestitus (strain NIES-2133 / IAM M-273 / BP-1).